The chain runs to 274 residues: tRNA uridine(34) hydroxylase (274 aa).

The 97-residue stretch at 121-217 (SRSDVYTIDT…YFKSTKNTNN (97 aa)) folds into the Rhodanese domain. The Cysteine persulfide intermediate role is filled by Cys-177.

It belongs to the TrhO family.

It carries out the reaction uridine(34) in tRNA + AH2 + O2 = 5-hydroxyuridine(34) in tRNA + A + H2O. In terms of biological role, catalyzes oxygen-dependent 5-hydroxyuridine (ho5U) modification at position 34 in tRNAs. This is tRNA uridine(34) hydroxylase from Ehrlichia canis (strain Jake).